The sequence spans 336 residues: Serpentine receptor class beta-15 (336 aa).

The next 7 membrane-spanning stretches (helical) occupy residues 24-44 (LFIHLFVSISSIIPLIYFVIF), 57-77 (FLFSAYFVSVFLFSVDFAIIS), 109-129 (IFMSLSTFFPISITIERFIAM), 142-162 (LGPILTGCNILLDLLIVFFIY), 186-206 (FTFFWVMFFLNLINFTFNSYL), 237-257 (VFVVFCHVILFGFYVIGIMIL), and 276-296 (GAFTTMISLYNLVVGSVAVYL).

The protein belongs to the nematode receptor-like protein srb family.

Its subcellular location is the membrane. This Caenorhabditis elegans protein is Serpentine receptor class beta-15 (srb-15).